Reading from the N-terminus, the 205-residue chain is Thiamine-phosphate synthase (205 aa).

4-amino-2-methyl-5-(diphosphooxymethyl)pyrimidine-binding positions include 37–41 and Asn69; that span reads QVREK. Residues Asp70 and Asp89 each coordinate Mg(2+). Ser108 contributes to the 4-amino-2-methyl-5-(diphosphooxymethyl)pyrimidine binding site. 134–136 lines the 2-[(2R,5Z)-2-carboxy-4-methylthiazol-5(2H)-ylidene]ethyl phosphate pocket; it reads TGS. Lys137 contributes to the 4-amino-2-methyl-5-(diphosphooxymethyl)pyrimidine binding site. Residues Gly165 and 185 to 186 contribute to the 2-[(2R,5Z)-2-carboxy-4-methylthiazol-5(2H)-ylidene]ethyl phosphate site; that span reads IS.

The protein belongs to the thiamine-phosphate synthase family. It depends on Mg(2+) as a cofactor.

It catalyses the reaction 2-[(2R,5Z)-2-carboxy-4-methylthiazol-5(2H)-ylidene]ethyl phosphate + 4-amino-2-methyl-5-(diphosphooxymethyl)pyrimidine + 2 H(+) = thiamine phosphate + CO2 + diphosphate. It carries out the reaction 2-(2-carboxy-4-methylthiazol-5-yl)ethyl phosphate + 4-amino-2-methyl-5-(diphosphooxymethyl)pyrimidine + 2 H(+) = thiamine phosphate + CO2 + diphosphate. The enzyme catalyses 4-methyl-5-(2-phosphooxyethyl)-thiazole + 4-amino-2-methyl-5-(diphosphooxymethyl)pyrimidine + H(+) = thiamine phosphate + diphosphate. It participates in cofactor biosynthesis; thiamine diphosphate biosynthesis; thiamine phosphate from 4-amino-2-methyl-5-diphosphomethylpyrimidine and 4-methyl-5-(2-phosphoethyl)-thiazole: step 1/1. Its function is as follows. Condenses 4-methyl-5-(beta-hydroxyethyl)thiazole monophosphate (THZ-P) and 2-methyl-4-amino-5-hydroxymethyl pyrimidine pyrophosphate (HMP-PP) to form thiamine monophosphate (TMP). In Clostridium botulinum (strain Loch Maree / Type A3), this protein is Thiamine-phosphate synthase.